We begin with the raw amino-acid sequence, 430 residues long: Serine/threonine-protein kinase Sgk1 (430 aa).

Residues 1–60 form a necessary for localization to the mitochondria region; sequence MTVKTEAARSTLTYSRMRGMVAILIAFMKQRRMGLNDFIQKLANNSYACKHPEVQSYLKI. The tract at residues 66–92 is disordered; sequence PELMNANPSPPPSPSQQINLGPSSNPH. A Phosphoserine modification is found at Ser-74. At Ser-78 the chain carries Phosphoserine; by MAPK7. Positions 81-91 are enriched in polar residues; the sequence is QQINLGPSSNP. Residues 98–354 enclose the Protein kinase domain; the sequence is FHFLKVIGKG…FMEIKSHIFF (257 aa). ATP is bound by residues 104 to 112 and Lys-127; that span reads IGKGSFGKV. The short motif at 131–141 is the Nuclear localization signal element; the sequence is KKAILKKKEEK. Asp-222 functions as the Proton acceptor in the catalytic mechanism. Position 256 is a phosphothreonine; by PDPK1 (Thr-256). The region spanning 355–430 is the AGC-kinase C-terminal domain; it reads SLINWDDLIN…SYAPPMDSFL (76 aa). Thr-368 is modified (phosphothreonine; by PKA). Phosphoserine occurs at positions 396, 400, and 421.

Belongs to the protein kinase superfamily. AGC Ser/Thr protein kinase family. In terms of assembly, homodimer; disulfide-linked. Forms a trimeric complex with FBXW7 and NOTCH1. Interacts with MAPK3/ERK1, MAPK1/ERK2, MAP2K1/MEK1, MAP2K2/MEK2, NEDD4, NEDD4L, MAPK7, CREB1, SLC9A3R2/NHERF2 and KCNJ1/ROMK1. Associates with the mammalian target of rapamycin complex 2 (mTORC2) via an interaction with MAPKAP1/SIN1. Interacts with MAPT/TAU. Post-translationally, regulated by phosphorylation. Activated by phosphorylation on Ser-421 by mTORC2, transforming it into a substrate for PDPK1 which phosphorylates it on Thr-256. Phosphorylation on Ser-396 and Ser-400 are also essential for its activity. Phosphorylation on Ser-78 by MAPK7 is required for growth factor-induced cell cycle progression. Ubiquitinated by NEDD4L; which promotes proteasomal degradation. Ubiquitinated by SYVN1 at the endoplasmic reticulum; which promotes rapid proteasomal degradation and maintains a high turnover rate in resting cells. As to expression, expressed in most tissues with highest levels in the ovary, thymus and lung. In the kidney, expressed within glomeruli of the cortex, at low levels in outer medulla and moderate levels in inner medulla and papilla.

Its subcellular location is the cytoplasm. The protein resides in the nucleus. The protein localises to the endoplasmic reticulum membrane. It localises to the cell membrane. It is found in the mitochondrion. It carries out the reaction L-seryl-[protein] + ATP = O-phospho-L-seryl-[protein] + ADP + H(+). The enzyme catalyses L-threonyl-[protein] + ATP = O-phospho-L-threonyl-[protein] + ADP + H(+). With respect to regulation, two specific sites, one in the kinase domain (Thr-256) and the other in the C-terminal regulatory region (Ser-421), need to be phosphorylated for its full activation. Phosphorylation at Ser-396 and Ser-400 are also essential for its activity. Activated by WNK1, WNK2, WNK3 and WNK4. Serine/threonine-protein kinase which is involved in the regulation of a wide variety of ion channels, membrane transporters, cellular enzymes, transcription factors, neuronal excitability, cell growth, proliferation, survival, migration and apoptosis. Plays an important role in cellular stress response. Contributes to regulation of renal Na(+) retention, renal K(+) elimination, salt appetite, gastric acid secretion, intestinal Na(+)/H(+) exchange and nutrient transport, insulin-dependent salt sensitivity of blood pressure, salt sensitivity of peripheral glucose uptake, cardiac repolarization and memory consolidation. Up-regulates Na(+) channels: SCNN1A/ENAC, SCN5A and ASIC1/ACCN2, K(+) channels: KCNJ1/ROMK1, KCNA1-5, KCNQ1-5 and KCNE1, epithelial Ca(2+) channels: TRPV5 and TRPV6, chloride channels: BSND, CLCN2 and CFTR, glutamate transporters: SLC1A3/EAAT1, SLC1A2 /EAAT2, SLC1A1/EAAT3, SLC1A6/EAAT4 and SLC1A7/EAAT5, amino acid transporters: SLC1A5/ASCT2, SLC38A1/SN1 and SLC6A19, creatine transporter: SLC6A8, Na(+)/dicarboxylate cotransporter: SLC13A2/NADC1, Na(+)-dependent phosphate cotransporter: SLC34A2/NAPI-2B, glutamate receptor: GRIK2/GLUR6. Up-regulates carriers: SLC9A3/NHE3, SLC12A1/NKCC2, SLC12A3/NCC, SLC5A3/SMIT, SLC2A1/GLUT1, SLC5A1/SGLT1 and SLC15A2/PEPT2. Regulates enzymes: GSK3A/B, PMM2 and Na(+)/K(+) ATPase, and transcription factors: CTNNB1 and nuclear factor NF-kappa-B. Stimulates sodium transport into epithelial cells by enhancing the stability and expression of SCNN1A/ENAC. This is achieved by phosphorylating the NEDD4L ubiquitin E3 ligase, promoting its interaction with 14-3-3 proteins, thereby preventing it from binding to SCNN1A/ENAC and targeting it for degradation. Regulates store-operated Ca(+2) entry (SOCE) by stimulating ORAI1 and STIM1. Regulates KCNJ1/ROMK1 directly via its phosphorylation or indirectly via increased interaction with SLC9A3R2/NHERF2. Phosphorylates MDM2 and activates MDM2-dependent ubiquitination of p53/TP53. Phosphorylates SLC2A4/GLUT4 and up-regulates its activity. Phosphorylates APBB1/FE65 and promotes its localization to the nucleus. Phosphorylates FBXW7 and plays an inhibitory role in the NOTCH1 signaling. Phosphorylates FOXO1 resulting in its relocalization from the nucleus to the cytoplasm. Phosphorylates FOXO3, promoting its exit from the nucleus and interference with FOXO3-dependent transcription. Phosphorylates BRAF and MAP3K3/MEKK3 and inhibits their activity. Phosphorylates SLC9A3/NHE3 in response to dexamethasone, resulting in its activation and increased localization at the cell membrane. Phosphorylates CREB1. Necessary for vascular remodeling during angiogenesis. Phosphorylates MAPT/TAU and mediates microtubule depolymerization and neurite formation in hippocampal neurons. Phosphorylates MAPK1/ERK2 and activates it by enhancing its interaction with MAP2K1/MEK1 and MAP2K2/MEK2. May also play an important role in the development of particular groups of neurons in the postnatal brain. The polypeptide is Serine/threonine-protein kinase Sgk1 (Sgk1) (Rattus norvegicus (Rat)).